Here is a 164-residue protein sequence, read N- to C-terminus: CASP-like protein 1C1 (164 aa).

The Cytoplasmic portion of the chain corresponds to 1-7; it reads MVKLTKR. A helical transmembrane segment spans residues 8–28; the sequence is IGGLVLRLAAFGAALAALIVM. Residues 29–51 lie on the Extracellular side of the membrane; sequence ITSRERASFLAISLEAKYTDMAA. A helical membrane pass occupies residues 52–72; that stretch reads FKYFVIANAVVSVYSFLVLFL. The Cytoplasmic segment spans residues 73-80; the sequence is PKESLLWK. A helical membrane pass occupies residues 81–101; sequence FVVVLDLVMTMLLTSSLSAAL. Residues 102 to 129 are Extracellular-facing; that stretch reads AVAQVGKKGNANAGWLPICGQVPKFCDQ. Residues 130 to 150 form a helical membrane-spanning segment; it reads ITGALIAGFVALVLYVLLLLY. The Cytoplasmic segment spans residues 151-164; that stretch reads SLHAVVDPFLLQKS.

This sequence belongs to the Casparian strip membrane proteins (CASP) family. In terms of assembly, homodimer and heterodimers. Expressed in the stele of the root.

The protein resides in the cell membrane. The chain is CASP-like protein 1C1 from Arabidopsis thaliana (Mouse-ear cress).